A 242-amino-acid polypeptide reads, in one-letter code: Glucosamine-6-phosphate deaminase (242 aa).

The active-site Proton acceptor; for enolization step is Asp-67. Asn-136 (for ring-opening step) is an active-site residue. Residue His-138 is the Proton acceptor; for ring-opening step of the active site. Glu-143 acts as the For ring-opening step in catalysis.

This sequence belongs to the glucosamine/galactosamine-6-phosphate isomerase family. NagB subfamily.

The catalysed reaction is alpha-D-glucosamine 6-phosphate + H2O = beta-D-fructose 6-phosphate + NH4(+). It functions in the pathway amino-sugar metabolism; N-acetylneuraminate degradation; D-fructose 6-phosphate from N-acetylneuraminate: step 5/5. Catalyzes the reversible isomerization-deamination of glucosamine 6-phosphate (GlcN6P) to form fructose 6-phosphate (Fru6P) and ammonium ion. This chain is Glucosamine-6-phosphate deaminase, found in Alkaliphilus metalliredigens (strain QYMF).